A 277-amino-acid chain; its full sequence is 2-dehydro-3-deoxyphosphooctonate aldolase (277 aa).

It belongs to the KdsA family.

It localises to the cytoplasm. The catalysed reaction is D-arabinose 5-phosphate + phosphoenolpyruvate + H2O = 3-deoxy-alpha-D-manno-2-octulosonate-8-phosphate + phosphate. It participates in carbohydrate biosynthesis; 3-deoxy-D-manno-octulosonate biosynthesis; 3-deoxy-D-manno-octulosonate from D-ribulose 5-phosphate: step 2/3. It functions in the pathway bacterial outer membrane biogenesis; lipopolysaccharide biosynthesis. The chain is 2-dehydro-3-deoxyphosphooctonate aldolase from Brucella canis (strain ATCC 23365 / NCTC 10854 / RM-666).